Here is a 149-residue protein sequence, read N- to C-terminus: Nucleoside diphosphate kinase 1 (149 aa).

ATP contacts are provided by lysine 9, phenylalanine 57, arginine 85, threonine 91, arginine 102, and asparagine 112. Histidine 115 functions as the Pros-phosphohistidine intermediate in the catalytic mechanism.

The protein belongs to the NDK family. As to quaternary structure, homohexamer. The cofactor is Mg(2+).

It carries out the reaction a 2'-deoxyribonucleoside 5'-diphosphate + ATP = a 2'-deoxyribonucleoside 5'-triphosphate + ADP. It catalyses the reaction a ribonucleoside 5'-diphosphate + ATP = a ribonucleoside 5'-triphosphate + ADP. In terms of biological role, major role in the synthesis of nucleoside triphosphates other than ATP. The ATP gamma phosphate is transferred to the NDP beta phosphate via a ping-pong mechanism, using a phosphorylated active-site intermediate. This NDK is microtubule-associated. The sequence is that of Nucleoside diphosphate kinase 1 (NDKR) from Oryza sativa subsp. japonica (Rice).